A 268-amino-acid polypeptide reads, in one-letter code: Tryptophan synthase alpha chain (268 aa).

Residues glutamate 49 and aspartate 60 each act as proton acceptor in the active site.

This sequence belongs to the TrpA family. As to quaternary structure, tetramer of two alpha and two beta chains.

It carries out the reaction (1S,2R)-1-C-(indol-3-yl)glycerol 3-phosphate + L-serine = D-glyceraldehyde 3-phosphate + L-tryptophan + H2O. It functions in the pathway amino-acid biosynthesis; L-tryptophan biosynthesis; L-tryptophan from chorismate: step 5/5. The alpha subunit is responsible for the aldol cleavage of indoleglycerol phosphate to indole and glyceraldehyde 3-phosphate. The sequence is that of Tryptophan synthase alpha chain from Sodalis glossinidius (strain morsitans).